A 557-amino-acid chain; its full sequence is Potassium-transporting ATPase potassium-binding subunit (557 aa).

10 consecutive transmembrane segments (helical) span residues 6-26, 59-79, 127-147, 172-192, 247-267, 278-298, 363-383, 410-430, 475-495, and 520-540; these read IQLL…GLGL, ALSL…ILFF, AGLT…LLAL, LYVL…FGVV, ISNF…VFLY, WAIF…VWTF, IVFG…LLTV, ILGI…SVSV, VMIA…VLVI, and FYIL…FPVL.

Belongs to the KdpA family. In terms of assembly, the system is composed of three essential subunits: KdpA, KdpB and KdpC.

Its subcellular location is the cell inner membrane. Part of the high-affinity ATP-driven potassium transport (or Kdp) system, which catalyzes the hydrolysis of ATP coupled with the electrogenic transport of potassium into the cytoplasm. This subunit binds the periplasmic potassium ions and delivers the ions to the membrane domain of KdpB through an intramembrane tunnel. This is Potassium-transporting ATPase potassium-binding subunit from Leptospira interrogans serogroup Icterohaemorrhagiae serovar copenhageni (strain Fiocruz L1-130).